The sequence spans 231 residues: Ribose-5-phosphate isomerase A (231 aa).

Substrate contacts are provided by residues 32–35 (TGST), 85–88 (DGAD), and 98–101 (KGGG). Catalysis depends on E107, which acts as the Proton acceptor. K125 is a substrate binding site.

It belongs to the ribose 5-phosphate isomerase family. As to quaternary structure, homodimer.

The enzyme catalyses aldehydo-D-ribose 5-phosphate = D-ribulose 5-phosphate. Its pathway is carbohydrate degradation; pentose phosphate pathway; D-ribose 5-phosphate from D-ribulose 5-phosphate (non-oxidative stage): step 1/1. Catalyzes the reversible conversion of ribose-5-phosphate to ribulose 5-phosphate. In Paraburkholderia phytofirmans (strain DSM 17436 / LMG 22146 / PsJN) (Burkholderia phytofirmans), this protein is Ribose-5-phosphate isomerase A.